The following is a 292-amino-acid chain: Tissue factor (292 aa).

The signal sequence occupies residues 1 to 32 (MAPPTRLQVPRPGTAVPYTVLLGWLLAQVARA). Over 33–250 (ADTTGRAYNL…SREQGRAREM (218 aa)) the chain is Extracellular. Fibronectin type-III domains lie at 35–126 (TTGR…PFRN) and 148–240 (QVGT…TECT). N-linked (GlcNAc...) asparagine glycosylation occurs at asparagine 41. 2 consecutive short sequence motifs (WKS motif) follow at residues 44–46 (WKS) and 75–77 (WKS). Cysteine 79 and cysteine 87 are oxidised to a cystine. N-linked (GlcNAc...) asparagine glycans are attached at residues asparagine 114, asparagine 154, asparagine 167, and asparagine 182. Cysteines 216 and 239 form a disulfide. The helical transmembrane segment at 251–271 (FFIIGAVVVVALLIIVLSVTV) threads the bilayer. At 272–292 (YKCRKARAGPSGKESSPLNIA) the chain is on the cytoplasmic side. The S-palmitoyl cysteine moiety is linked to residue cysteine 274.

Belongs to the tissue factor family. As to quaternary structure, interacts with HSPE; the interaction, inhibited by heparin, promotes the generation of activated factor X and activates coagulation in the presence of activated factor VII. As to expression, brain, heart.

It is found in the membrane. Initiates blood coagulation by forming a complex with circulating factor VII or VIIa. The [TF:VIIa] complex activates factors IX or X by specific limited proteolysis. TF plays a role in normal hemostasis by initiating the cell-surface assembly and propagation of the coagulation protease cascade. The protein is Tissue factor (F3) of Oryctolagus cuniculus (Rabbit).